The sequence spans 557 residues: Urocanate hydratase (557 aa).

Residues 1–20 are disordered; it reads MSNPRHNEREVRSPRGDELN. NAD(+) contacts are provided by residues 52-53, Q130, 176-178, E196, R201, 242-243, 263-267, 273-274, and Y322; these read GG, GMG, NA, QTSAH, and YL. C410 is a catalytic residue. NAD(+) is bound at residue G492.

The protein belongs to the urocanase family. NAD(+) serves as cofactor.

Its subcellular location is the cytoplasm. The catalysed reaction is 4-imidazolone-5-propanoate = trans-urocanate + H2O. Its pathway is amino-acid degradation; L-histidine degradation into L-glutamate; N-formimidoyl-L-glutamate from L-histidine: step 2/3. Its function is as follows. Catalyzes the conversion of urocanate to 4-imidazolone-5-propionate. The chain is Urocanate hydratase from Brucella ovis (strain ATCC 25840 / 63/290 / NCTC 10512).